A 515-amino-acid chain; its full sequence is uncharacterized protein (515 aa).

3 consecutive transmembrane segments (helical) span residues 1-21 (MSFV…LAGI), 165-185 (IGGP…GLLF), and 199-219 (GPVG…GLFG). The PE domain occupies 1–93 (MSFVVAAPEV…AGAYAGAEAA (93 aa)). Positions 349 to 360 (GGTLIGNGGDGG) are enriched in gly residues. Disordered stretches follow at residues 349–368 (GGTL…TDGF) and 463–515 (GVSG…SPGG).

It belongs to the mycobacterial PE family. PGRS subfamily.

It is found in the cell membrane. This is an uncharacterized protein from Mycobacterium tuberculosis (strain CDC 1551 / Oshkosh).